Here is a 348-residue protein sequence, read N- to C-terminus: UDP-3-O-acylglucosamine N-acyltransferase (348 aa).

Residue His-248 is the Proton acceptor of the active site.

Belongs to the transferase hexapeptide repeat family. LpxD subfamily. Homotrimer.

The enzyme catalyses a UDP-3-O-[(3R)-3-hydroxyacyl]-alpha-D-glucosamine + a (3R)-hydroxyacyl-[ACP] = a UDP-2-N,3-O-bis[(3R)-3-hydroxyacyl]-alpha-D-glucosamine + holo-[ACP] + H(+). The protein operates within bacterial outer membrane biogenesis; LPS lipid A biosynthesis. Catalyzes the N-acylation of UDP-3-O-acylglucosamine using 3-hydroxyacyl-ACP as the acyl donor. Is involved in the biosynthesis of lipid A, a phosphorylated glycolipid that anchors the lipopolysaccharide to the outer membrane of the cell. This chain is UDP-3-O-acylglucosamine N-acyltransferase, found in Rippkaea orientalis (strain PCC 8801 / RF-1) (Cyanothece sp. (strain PCC 8801)).